Reading from the N-terminus, the 747-residue chain is Myotubularin-related protein 12 (747 aa).

The Myotubularin phosphatase domain maps to 205 to 643; sequence FDTPKDWCWE…PEIKVWAQRY (439 aa). Positions 449–558 are interaction with MTM1; that stretch reads VPIFLLFLDC…RGQQKGSRFK (110 aa). The interval 548 to 575 is disordered; the sequence is DRGQQKGSRFKHQRQLSLPLTQSKSSPK. Residues 562 to 572 are compositionally biased toward polar residues; the sequence is QLSLPLTQSKS. A phosphoserine mark is found at serine 564 and serine 601.

Belongs to the protein-tyrosine phosphatase family. Non-receptor class myotubularin subfamily. Heterodimer with lipid phosphatase MTM1. Heterodimer with lipid phosphatase MTMR2. As to expression, expressed in skeletal muscles (at protein level).

It is found in the cytoplasm. Its subcellular location is the sarcoplasmic reticulum. The protein resides in the myofibril. The protein localises to the sarcomere. Its function is as follows. Acts as an adapter for the myotubularin-related phosphatases. Regulates phosphatase MTM1 protein stability and possibly its intracellular location. By stabilizing MTM1 protein levels, required for skeletal muscle maintenance but not for myogenesis. The polypeptide is Myotubularin-related protein 12 (Mtmr12) (Mus musculus (Mouse)).